Reading from the N-terminus, the 242-residue chain is 1-(5-phosphoribosyl)-5-[(5-phosphoribosylamino)methylideneamino] imidazole-4-carboxamide isomerase (242 aa).

The active-site Proton acceptor is aspartate 8. The Proton donor role is filled by aspartate 129.

The protein belongs to the HisA/HisF family.

The protein localises to the cytoplasm. It carries out the reaction 1-(5-phospho-beta-D-ribosyl)-5-[(5-phospho-beta-D-ribosylamino)methylideneamino]imidazole-4-carboxamide = 5-[(5-phospho-1-deoxy-D-ribulos-1-ylimino)methylamino]-1-(5-phospho-beta-D-ribosyl)imidazole-4-carboxamide. Its pathway is amino-acid biosynthesis; L-histidine biosynthesis; L-histidine from 5-phospho-alpha-D-ribose 1-diphosphate: step 4/9. This Clostridium botulinum (strain Kyoto / Type A2) protein is 1-(5-phosphoribosyl)-5-[(5-phosphoribosylamino)methylideneamino] imidazole-4-carboxamide isomerase.